The chain runs to 403 residues: Probable tRNA sulfurtransferase (403 aa).

Residues 60 to 165 (QLAEERLKPI…KEGVFLSCRT (106 aa)) form the THUMP domain. Residues 183–184 (ML), 208–209 (HF), R265, G287, and Q296 contribute to the ATP site.

It belongs to the ThiI family.

The protein resides in the cytoplasm. The enzyme catalyses [ThiI sulfur-carrier protein]-S-sulfanyl-L-cysteine + a uridine in tRNA + 2 reduced [2Fe-2S]-[ferredoxin] + ATP + H(+) = [ThiI sulfur-carrier protein]-L-cysteine + a 4-thiouridine in tRNA + 2 oxidized [2Fe-2S]-[ferredoxin] + AMP + diphosphate. It catalyses the reaction [ThiS sulfur-carrier protein]-C-terminal Gly-Gly-AMP + S-sulfanyl-L-cysteinyl-[cysteine desulfurase] + AH2 = [ThiS sulfur-carrier protein]-C-terminal-Gly-aminoethanethioate + L-cysteinyl-[cysteine desulfurase] + A + AMP + 2 H(+). The protein operates within cofactor biosynthesis; thiamine diphosphate biosynthesis. Its function is as follows. Catalyzes the ATP-dependent transfer of a sulfur to tRNA to produce 4-thiouridine in position 8 of tRNAs, which functions as a near-UV photosensor. Also catalyzes the transfer of sulfur to the sulfur carrier protein ThiS, forming ThiS-thiocarboxylate. This is a step in the synthesis of thiazole, in the thiamine biosynthesis pathway. The sulfur is donated as persulfide by IscS. In Listeria innocua serovar 6a (strain ATCC BAA-680 / CLIP 11262), this protein is Probable tRNA sulfurtransferase.